The primary structure comprises 278 residues: Probable septum site-determining protein MinC (278 aa).

Residues 104-167 (RTQQSVDPAP…ASHTPAAPQS (64 aa)) are disordered.

Belongs to the MinC family. In terms of assembly, interacts with MinD and FtsZ.

In terms of biological role, cell division inhibitor that blocks the formation of polar Z ring septums. Rapidly oscillates between the poles of the cell to destabilize FtsZ filaments that have formed before they mature into polar Z rings. Prevents FtsZ polymerization. The polypeptide is Probable septum site-determining protein MinC (Bordetella avium (strain 197N)).